The following is a 108-amino-acid chain: Ig kappa chain V region GOM (108 aa).

Residues 1–23 (DIVMTQTPLSLSVSPGEPASISC) are framework-1. Cysteine 23 and cysteine 88 form a disulfide bridge. The tract at residues 24–34 (RSSQSNLDYLN) is complementarity-determining-1. Residues 35–49 (WYLQKAGQSPRLLPE) are framework-2. A disordered region spans residues 44–66 (PRLLPEQDSQRASGVPDRFSGSG). The tract at residues 50–56 (QDSQRAS) is complementarity-determining-2. A framework-3 region spans residues 57–88 (GVPDRFSGSGSGTDFTLRIGRVEAEDAGIYYC). The tract at residues 89-97 (MQRSFYPYT) is complementarity-determining-3. The segment at 98–107 (FGQGTRLEVR) is framework-4.

In Canis lupus familiaris (Dog), this protein is Ig kappa chain V region GOM.